A 277-amino-acid polypeptide reads, in one-letter code: Large ribosomal subunit protein uL2 (277 aa).

2 disordered regions span residues 37–60 (KNSTAGRNSNGHITTRHKGGGHKH) and 223–265 (VVMN…KRTD). Residues 39–49 (STAGRNSNGHI) show a composition bias toward polar residues. Residues 50-60 (TTRHKGGGHKH) show a composition bias toward basic residues. A compositionally biased stretch (basic and acidic residues) spans 229-244 (DHPHGGGEGRTGEARE).

It belongs to the universal ribosomal protein uL2 family. Part of the 50S ribosomal subunit. Forms a bridge to the 30S subunit in the 70S ribosome.

Its function is as follows. One of the primary rRNA binding proteins. Required for association of the 30S and 50S subunits to form the 70S ribosome, for tRNA binding and peptide bond formation. It has been suggested to have peptidyltransferase activity; this is somewhat controversial. Makes several contacts with the 16S rRNA in the 70S ribosome. In Neisseria meningitidis serogroup C (strain 053442), this protein is Large ribosomal subunit protein uL2.